Here is a 434-residue protein sequence, read N- to C-terminus: Trigger factor (434 aa).

Positions 163 to 248 constitute a PPIase FKBP-type domain; it reads GDTAVIDFAG…VHDIKRKELP (86 aa).

The protein belongs to the FKBP-type PPIase family. Tig subfamily.

The protein resides in the cytoplasm. It catalyses the reaction [protein]-peptidylproline (omega=180) = [protein]-peptidylproline (omega=0). Its function is as follows. Involved in protein export. Acts as a chaperone by maintaining the newly synthesized protein in an open conformation. Functions as a peptidyl-prolyl cis-trans isomerase. In Shouchella clausii (strain KSM-K16) (Alkalihalobacillus clausii), this protein is Trigger factor.